The chain runs to 446 residues: RUN domain-containing protein 3A (446 aa).

An interaction with RAP2A region spans residues 1 to 298 (MEASFVQTTM…LQLQLEEAAA (298 aa)). The 138-residue stretch at 52 to 189 (DDSSEEFVNF…IDFSFCLKGE (138 aa)) folds into the RUN domain. At Thr215 the chain carries Phosphothreonine. The disordered stretch occupies residues 216–239 (DEEERHSAESSTSEDNSPEHPYLP). Position 232 is a phosphoserine (Ser232). Residues 267–322 (YLEELVRLRESQLKDLEAENRRLQLQLEEAAAQNQREKRELEGVILELQEQLTGLI) adopt a coiled-coil conformation. Positions 372-384 (PLSAEASLSSDSQ) are enriched in polar residues. Residues 372 to 403 (PLSAEASLSSDSQRLGEAKRDEEPWGPIGKDP) form a disordered region. Residues 385–394 (RLGEAKRDEE) show a composition bias toward basic and acidic residues. Phosphoserine is present on residues Ser416 and Ser419.

This sequence belongs to the RUNDC3 family. Interacts with the GTP-bound form of RAP2A. Brain.

Functionally, may act as an effector of RAP2A in neuronal cells. The sequence is that of RUN domain-containing protein 3A (Rundc3a) from Mus musculus (Mouse).